The chain runs to 44 residues: U4-ctenitoxin-Co1a (44 aa).

Intrachain disulfides connect cysteine 2-cysteine 19, cysteine 9-cysteine 25, cysteine 18-cysteine 39, and cysteine 27-cysteine 37.

Expressed by the venom gland.

It is found in the secreted. Functionally, omega-agatoxins are antagonists of voltage-gated calcium channels (Cav). Toxic to mice by intracerebroventricular injection. The sequence is that of U4-ctenitoxin-Co1a from Ctenus ornatus (Brazilian spider).